A 106-amino-acid polypeptide reads, in one-letter code: Iron-sulfur cluster assembly protein CyaY (106 aa).

It belongs to the frataxin family.

Its function is as follows. Involved in iron-sulfur (Fe-S) cluster assembly. May act as a regulator of Fe-S biogenesis. The polypeptide is Iron-sulfur cluster assembly protein CyaY (Salmonella schwarzengrund (strain CVM19633)).